The sequence spans 311 residues: N-acetyl-gamma-glutamyl-phosphate reductase (311 aa).

Cys-117 is a catalytic residue.

This sequence belongs to the NAGSA dehydrogenase family. Type 2 subfamily.

It localises to the cytoplasm. It catalyses the reaction N-acetyl-L-glutamate 5-semialdehyde + phosphate + NADP(+) = N-acetyl-L-glutamyl 5-phosphate + NADPH + H(+). It functions in the pathway amino-acid biosynthesis; L-arginine biosynthesis; N(2)-acetyl-L-ornithine from L-glutamate: step 3/4. Its function is as follows. Catalyzes the NADPH-dependent reduction of N-acetyl-5-glutamyl phosphate to yield N-acetyl-L-glutamate 5-semialdehyde. The sequence is that of N-acetyl-gamma-glutamyl-phosphate reductase from Brucella anthropi (strain ATCC 49188 / DSM 6882 / CCUG 24695 / JCM 21032 / LMG 3331 / NBRC 15819 / NCTC 12168 / Alc 37) (Ochrobactrum anthropi).